A 40-amino-acid chain; its full sequence is uncharacterized protein (40 aa).

This is an uncharacterized protein from Leptolyngbya boryana (Plectonema boryanum).